The chain runs to 461 residues: Photosystem II CP43 reaction center protein (461 aa).

Residues 1-2 (ME) constitute a propeptide that is removed on maturation. T3 carries the N-acetylthreonine modification. T3 is modified (phosphothreonine). The next 5 helical transmembrane spans lie at 57–81 (LFEV…PHLA), 122–143 (LAGP…KRKK), 166–188 (KAMY…RSIT), 243–263 (RPSP…LSYS), and 279–300 (WFNN…ASQA). [CaMn4O5] cluster is bound at residue E355. Residues 435–459 (RARAAAIGFEKGIDRSREIARKLKP) traverse the membrane as a helical segment.

Belongs to the PsbB/PsbC family. PsbC subfamily. In terms of assembly, PSII is composed of 1 copy each of membrane proteins PsbA, PsbB, PsbC, PsbD, PsbE, PsbF, PsbH, PsbI, PsbJ, PsbK, PsbL, PsbM, PsbT, PsbY, PsbZ, Psb30/Ycf12, at least 3 peripheral proteins of the oxygen-evolving complex and a large number of cofactors. It forms dimeric complexes. It depends on Binds multiple chlorophylls and provides some of the ligands for the Ca-4Mn-5O cluster of the oxygen-evolving complex. It may also provide a ligand for a Cl- that is required for oxygen evolution. PSII binds additional chlorophylls, carotenoids and specific lipids. as a cofactor.

It is found in the plastid. The protein localises to the chloroplast thylakoid membrane. In terms of biological role, one of the components of the core complex of photosystem II (PSII). It binds chlorophyll and helps catalyze the primary light-induced photochemical processes of PSII. PSII is a light-driven water:plastoquinone oxidoreductase, using light energy to abstract electrons from H(2)O, generating O(2) and a proton gradient subsequently used for ATP formation. In Euglena gracilis, this protein is Photosystem II CP43 reaction center protein.